The following is a 258-amino-acid chain: UDP-2,3-diacylglucosamine hydrolase (258 aa).

D15, H17, D48, N88, and H123 together coordinate Mn(2+). Substrate is bound at residue 88–89 (NR). 5 residues coordinate substrate: D131, S169, N173, K176, and H204. H204 and H206 together coordinate Mn(2+).

It belongs to the LpxH family. Requires Mn(2+) as cofactor.

It localises to the cell inner membrane. It carries out the reaction UDP-2-N,3-O-bis[(3R)-3-hydroxytetradecanoyl]-alpha-D-glucosamine + H2O = 2-N,3-O-bis[(3R)-3-hydroxytetradecanoyl]-alpha-D-glucosaminyl 1-phosphate + UMP + 2 H(+). The protein operates within glycolipid biosynthesis; lipid IV(A) biosynthesis; lipid IV(A) from (3R)-3-hydroxytetradecanoyl-[acyl-carrier-protein] and UDP-N-acetyl-alpha-D-glucosamine: step 4/6. In terms of biological role, hydrolyzes the pyrophosphate bond of UDP-2,3-diacylglucosamine to yield 2,3-diacylglucosamine 1-phosphate (lipid X) and UMP by catalyzing the attack of water at the alpha-P atom. Involved in the biosynthesis of lipid A, a phosphorylated glycolipid that anchors the lipopolysaccharide to the outer membrane of the cell. The protein is UDP-2,3-diacylglucosamine hydrolase of Bordetella pertussis (strain Tohama I / ATCC BAA-589 / NCTC 13251).